Reading from the N-terminus, the 194-residue chain is Imidazoleglycerol-phosphate dehydratase (194 aa).

It belongs to the imidazoleglycerol-phosphate dehydratase family.

The protein localises to the cytoplasm. It carries out the reaction D-erythro-1-(imidazol-4-yl)glycerol 3-phosphate = 3-(imidazol-4-yl)-2-oxopropyl phosphate + H2O. It functions in the pathway amino-acid biosynthesis; L-histidine biosynthesis; L-histidine from 5-phospho-alpha-D-ribose 1-diphosphate: step 6/9. The polypeptide is Imidazoleglycerol-phosphate dehydratase (Bacillus thuringiensis (strain Al Hakam)).